Here is a 797-residue protein sequence, read N- to C-terminus: Protocadherin beta-9 (797 aa).

Positions 1–26 (MKTRGFSFPRQRQVLFLFLFWGVSLA) are cleaved as a signal peptide. The Extracellular segment spans residues 27 to 690 (GSGFGRYSVT…AQADLLTVYL (664 aa)). Cadherin domains lie at 35 to 133 (VTEE…SPVF), 138 to 242 (MVLK…VPQF), 247 to 347 (YETQ…PPEL), 352 to 451 (LSNS…APAF), and 456 to 561 (YTLF…SPFV). Asparagine 169 carries an N-linked (GlcNAc...) asparagine glycan. Residue asparagine 418 is glycosylated (N-linked (GlcNAc...) asparagine). Asparagine 567 carries N-linked (GlcNAc...) asparagine glycosylation. In terms of domain architecture, Cadherin 6 spans 568 to 671 (GSAPCTELVP…LVDGFSQPYL (104 aa)). The helical transmembrane segment at 691 to 711 (VVALASVSSLFLLSVLLFVAV) threads the bilayer. Topologically, residues 712–797 (RLCRRSRAAS…TLPNSFGFNY (86 aa)) are cytoplasmic. Residues 777 to 797 (HRGGKEIEENSTLPNSFGFNY) are disordered. The segment covering 786-797 (NSTLPNSFGFNY) has biased composition (polar residues).

It localises to the cell membrane. In terms of biological role, potential calcium-dependent cell-adhesion protein. May be involved in the establishment and maintenance of specific neuronal connections in the brain. This is Protocadherin beta-9 (PCDHB9) from Homo sapiens (Human).